The chain runs to 337 residues: Neurogenic differentiation factor 6 (337 aa).

Positions 43–82 (LRGKSIKRAPGEETEKEEEEEDREEEDENGLPRRRGLRKK) are disordered. A compositionally biased stretch (acidic residues) spans 54-71 (EETEKEEEEEDREEEDEN). The Nuclear localization signal motif lies at 80–86 (RKKKTTK). Residues 94 to 146 (FRRQEANARERNRMHGLNDALDNLRKVVPCYSKTQKLSKIETLRLAKNYIWAL) enclose the bHLH domain.

As to quaternary structure, efficient DNA binding requires dimerization with another bHLH protein.

The protein localises to the nucleus. Its function is as follows. Activates E box-dependent transcription in collaboration with TCF3/E47. May be a trans-acting factor involved in the development and maintenance of the mammalian nervous system. Transactivates the promoter of its own gene. The sequence is that of Neurogenic differentiation factor 6 (NEUROD6) from Bos taurus (Bovine).